The primary structure comprises 707 residues: Caprin-1 (707 aa).

Low complexity-rich tracts occupy residues 1 to 15 (MPSA…SKSS) and 22 to 43 (GSSG…PATG). The interval 1–48 (MPSATSHSGSGSKSSGPPPPSGSSGSEAAAGAAAPASQHPATGTGAVQ) is disordered. Pro-2 carries the N-acetylproline modification. Ser-10 is modified (phosphoserine). Residues 58–92 (VIDKKLRNLEKKKGKLDDYQERMNKGERLNQDQLD) adopt a coiled-coil conformation. At Ser-113 the chain carries Phosphoserine. Residues 123–151 (KTIKKTARREQLMREEAEQKRLKTVLELQ) are a coiled coil. Omega-N-methylarginine is present on Arg-163. The interval 325 to 347 (LQQQPQAASPSVPEPHSLTPVAQ) is disordered. The span at 326 to 335 (QQQPQAASPS) shows a compositional bias: low complexity. 2 positions are modified to phosphoserine: Ser-333 and Ser-341. The G3BP1-binding stretch occupies residues 358 to 379 (QDLMAQMQGPYNFIQDSMLDFE). Disordered regions lie at residues 412 to 443 (ESRL…YTAS), 523 to 558 (PVPP…EQTE), and 570 to 620 (TYHG…RGLM). Positions 431–443 (PLVSSTSEGYTAS) are enriched in polar residues. The segment covering 535–558 (QQSQYQASYNQSFSSQPHQVEQTE) has biased composition (low complexity). The segment covering 572-603 (HGSQDQPHQVPGNHQQPPQQSTGFPRSSQPYY) has biased composition (polar residues). Tyr-623 bears the Phosphotyrosine mark. Residues Arg-624 and Arg-631 each carry the omega-N-methylarginine modification. Residues Tyr-634 and Tyr-637 each carry the phosphotyrosine modification. Arg-638 bears the Omega-N-methylarginine mark. Positions 641–655 (FSNTPNSGYTQSQFN) are enriched in polar residues. The disordered stretch occupies residues 641–707 (FSNTPNSGYT…MPQMNTQQVN (67 aa)). O-linked (GlcNAc) serine glycans are attached at residues Ser-642 and Ser-647. Phosphotyrosine occurs at positions 649, 660, 663, and 668. 2 stretches are compositionally biased toward low complexity: residues 674 to 684 (RGSGQSGPRGA) and 695 to 707 (NRGM…QQVN). Arg-696 is subject to Asymmetric dimethylarginine; alternate. The residue at position 696 (Arg-696) is an Omega-N-methylarginine; alternate.

It belongs to the caprin family. In terms of assembly, may form homomultimers. Interacts with G3BP1; interaction is direct and promotes stress granule formation. Interacts with G3BP2; interaction is direct and promotes stress granule formation. Interacts with PQBP1. Interacts with DDX3X. Interacts (when phosphorylated by EPHA4) with FMR1; interaction with FMR1 promotes formation of a membraneless compartment. In terms of processing, tyrosine phosphorylation by EPHA4 promotes interaction with FMR1 and liquid-liquid phase separation (LLPS) for the formation of a membraneless compartment that concentrates mRNAs with associated regulatory factors. O-glycosylated (O-GlcNAcylated), in a cell cycle-dependent manner. O-glycosylation by OGT inhibit ability to undergo liquid-liquid phase separation (LLPS). Expressed in hippocampal and neocortical pyramidal neurons, but not in Purkinje cells.

It is found in the cytoplasm. The protein localises to the cytoplasmic ribonucleoprotein granule. Its subcellular location is the cytosol. The protein resides in the cell projection. It localises to the dendrite. It is found in the lamellipodium. With respect to regulation, ability to mediate liquid-liquid phase separation is regulated by ATP: moderate concentrations of ATP enhance phase separation, whereas high concentrations of ATP lead to inhibition of phase separation. MRNA-binding protein that acts as a regulator of mRNAs transport, translation and/or stability, and which is involved in neurogenesis, synaptic plasticity in neurons and cell proliferation and migration in multiple cell types. Plays an essential role in cytoplasmic stress granule formation. Acts as an mRNA regulator by mediating formation of some phase-separated membraneless compartment: undergoes liquid-liquid phase separation upon binding to target mRNAs, leading to assemble mRNAs into cytoplasmic ribonucleoprotein granules that concentrate mRNAs with associated regulatory factors. Undergoes liquid-liquid phase separation following phosphorylation and interaction with FMR1, promoting formation of cytoplasmic ribonucleoprotein granules that concentrate mRNAs with factors that inhibit translation and mediate deadenylation of target mRNAs. In these cytoplasmic ribonucleoprotein granules, CAPRIN1 mediates recruitment of CNOT7 deadenylase, leading to mRNA deadenylation and degradation. Binds directly and selectively to MYC and CCND2 mRNAs. In neuronal cells, directly binds to several mRNAs associated with RNA granules, including BDNF, CAMK2A, CREB1, MAP2, NTRK2 mRNAs, as well as to GRIN1 and KPNB1 mRNAs, but not to rRNAs. In Rattus norvegicus (Rat), this protein is Caprin-1 (Caprin1).